We begin with the raw amino-acid sequence, 1260 residues long: Phosphatidylinositol 3,4,5-trisphosphate 5-phosphatase 2 (1260 aa).

Positions 25–121 (WYHRDLSRAA…GLVCALLLPV (97 aa)) constitute an SH2 domain. Residues 126–136 (ELDPPDERDAS) are compositionally biased toward basic and acidic residues. Residues 126–178 (ELDPPDERDASDGEDEKPPLPPRSGTSVSAPLGPSSPPAAPEPPTPAVESAPN) form a disordered region. Ser136 is modified (phosphoserine). Pro residues predominate over residues 159-171 (PSSPPAAPEPPTP). Ser243 and Ser355 each carry phosphoserine. Tyr888 is modified (phosphotyrosine). Ser892 carries the phosphoserine modification. Residues 899-1120 (GAKSKAPSVS…FLGEAAGGDD (222 aa)) form a disordered region. The segment covering 940 to 952 (PPPTGRPPAPPRA) has biased composition (pro residues). The SH3-binding motif lies at 946-951 (PPAPPR). The span at 953–967 (APREEPLTPRLKPEG) shows a compositional bias: basic and acidic residues. Thr960 bears the Phosphothreonine mark. Residues 985-988 (NPAY) carry the NPXY motif motif. Tyr988 carries the post-translational modification Phosphotyrosine. Pro residues-rich tracts occupy residues 998–1013 (LLPP…PVPP), 1050–1061 (LPPPDFPPPPLP), and 1090–1108 (LPPP…PLPP). Ser1133 is subject to Phosphoserine. Tyr1164 carries the post-translational modification Phosphotyrosine. The disordered stretch occupies residues 1181-1200 (EDLAEEAPCPQAGRTGGLGE). One can recognise an SAM domain in the interval 1198 to 1260 (LGEAGMGAWL…LLLDTLQLSK (63 aa)). At Ser1259 the chain carries Phosphoserine.

This sequence belongs to the inositol 1,4,5-trisphosphate 5-phosphatase family. In terms of assembly, interacts with tyrosine phosphorylated form of SHC1. Interacts with EGFR. Upon stimulation by the EGF signaling pathway, it forms a complex with SHC1 and EGFR. Interacts with cytoskeletal protein SORBS3/vinexin, promoting its localization to the periphery of cells. Forms a complex with filamin (FLNA or FLNB), actin, GPIb (GP1BA or GP1BB) that regulates cortical and submembraneous actin. Interacts with c-Met/MET, when c-Met/MET is phosphorylated on 'Tyr-1356'. Interacts with p130Cas/BCAR1. Interacts with CENTD3/ARAP3 via its SAM domain. Interacts with c-Cbl/CBL and CAP/SORBS1. Interacts with activated EPHA2 receptor. Interacts with receptor FCGR2A. Interacts with receptor FCGR2B. Interacts with tyrosine kinase ABL1. Interacts with tyrosine kinase TEC. Interacts with CSF1R. Interacts (via N-terminus) with SH3YL1 (via SH3 domain). Interacts with FCRL6 (tyrosine phosphorylated form). Interacts (via SH2 domain) with tyrosine phosphorylated KLRC1 (via ITIM). Interacts with NEDD9/HEF1. Tyrosine phosphorylated by the members of the SRC family after exposure to a diverse array of extracellular stimuli such as insulin, growth factors such as EGF or PDGF, chemokines, integrin ligands and hypertonic and oxidative stress. May be phosphorylated upon IgG receptor FCGR2B-binding. Phosphorylated at Tyr-988 following cell attachment and spreading. Phosphorylated at Tyr-1164 following EGF signaling pathway stimulation. Expressed abundantly in skeletal muscle tissue.

It is found in the cytoplasm. Its subcellular location is the cytosol. It localises to the cytoskeleton. The protein localises to the membrane. The protein resides in the cell projection. It is found in the filopodium. Its subcellular location is the lamellipodium. It localises to the basal cell membrane. The protein localises to the nucleus. The protein resides in the nucleus speckle. It is found in the spindle pole. It catalyses the reaction a 1,2-diacyl-sn-glycero-3-phospho-(1D-myo-inositol-3,4,5-trisphosphate) + H2O = a 1,2-diacyl-sn-glycero-3-phospho-(1D-myo-inositol-3,4-bisphosphate) + phosphate. It carries out the reaction 1,2-dioctanoyl-sn-glycero-3-phospho-(1D-myo-inositol-3,4,5-trisphosphate) + H2O = 1,2-dioctanoyl-sn-glycero-3-phospho-(1D-myo-inositol-3,4-bisphosphate) + phosphate. The enzyme catalyses 1,2-dihexadecanoyl-sn-glycero-3-phospho-(1D-myo-inositol-3,4,5-trisphosphate) + H2O = 1,2-dihexadecanoyl-sn-glycero-3-phospho-(1D-myo-inositol-3,4-bisphosphate) + phosphate. Its activity is regulated as follows. Activated upon translocation to the sites of synthesis of PtdIns(3,4,5)P3 in the membrane. Enzymatic activity is enhanced in the presence of phosphatidylserine. In terms of biological role, phosphatidylinositol (PtdIns) phosphatase that specifically hydrolyzes the 5-phosphate of phosphatidylinositol-3,4,5-trisphosphate (PtdIns(3,4,5)P3) to produce PtdIns(3,4)P2, thereby negatively regulating the PI3K (phosphoinositide 3-kinase) pathways. Required for correct mitotic spindle orientation and therefore progression of mitosis. Plays a central role in regulation of PI3K-dependent insulin signaling, although the precise molecular mechanisms and signaling pathways remain unclear. While overexpression reduces both insulin-stimulated MAP kinase and Akt activation, its absence does not affect insulin signaling or GLUT4 trafficking. Confers resistance to dietary obesity. May act by regulating AKT2, but not AKT1, phosphorylation at the plasma membrane. Part of a signaling pathway that regulates actin cytoskeleton remodeling. Required for the maintenance and dynamic remodeling of actin structures as well as in endocytosis, having a major impact on ligand-induced EGFR internalization and degradation. Participates in regulation of cortical and submembraneous actin by hydrolyzing PtdIns(3,4,5)P3 thereby regulating membrane ruffling. Regulates cell adhesion and cell spreading. Required for HGF-mediated lamellipodium formation, cell scattering and spreading. Acts as a negative regulator of EPHA2 receptor endocytosis by inhibiting via PI3K-dependent Rac1 activation. Acts as a regulator of neuritogenesis by regulating PtdIns(3,4,5)P3 level and is required to form an initial protrusive pattern, and later, maintain proper neurite outgrowth. Acts as a negative regulator of the FC-gamma-RIIA receptor (FCGR2A). Mediates signaling from the FC-gamma-RIIB receptor (FCGR2B), playing a central role in terminating signal transduction from activating immune/hematopoietic cell receptor systems. Involved in EGF signaling pathway. Upon stimulation by EGF, it is recruited by EGFR and dephosphorylates PtdIns(3,4,5)P3. Plays a negative role in regulating the PI3K-PKB pathway, possibly by inhibiting PKB activity. Down-regulates Fc-gamma-R-mediated phagocytosis in macrophages independently of INPP5D/SHIP1. In macrophages, down-regulates NF-kappa-B-dependent gene transcription by regulating macrophage colony-stimulating factor (M-CSF)-induced signaling. Plays a role in the localization of AURKA and NEDD9/HEF1 to the basolateral membrane at interphase in polarized cysts, thereby mediates cell cycle homeostasis, cell polarization and cilia assembly. Additionally promotion of cilia growth is also facilitated by hydrolysis of (PtdIns(3,4,5)P3) to PtdIns(3,4)P2. Promotes formation of apical membrane-initiation sites during the initial stages of lumen formation via Rho family-induced actin filament organization and CTNNB1 localization to cell-cell contacts. May also hydrolyze PtdIns(1,3,4,5)P4, and could thus affect the levels of the higher inositol polyphosphates like InsP6. Involved in endochondral ossification. This chain is Phosphatidylinositol 3,4,5-trisphosphate 5-phosphatase 2, found in Sus scrofa (Pig).